We begin with the raw amino-acid sequence, 406 residues long: NIPA-like protein 3 (406 aa).

Transmembrane regions (helical) follow at residues 33–53 (NLIG…ALNL), 76–96 (WWLG…SYAF), 101–121 (LIVP…IIFI), and 135–155 (ILSF…VTFA). Asn-166 is a glycosylation site (N-linked (GlcNAc...) asparagine). A run of 5 helical transmembrane segments spans residues 171–191 (LVSW…CLLL), 202–222 (IVVI…TVKA), 240–260 (PIFY…AAFL), 271–291 (LIAS…GAIF), and 300–320 (VLHI…VFLI). Ser-372 carries the post-translational modification Phosphoserine.

This sequence belongs to the NIPA family.

Its subcellular location is the membrane. The polypeptide is NIPA-like protein 3 (NIPAL3) (Pongo abelii (Sumatran orangutan)).